The chain runs to 235 residues: Geranylgeranylglyceryl phosphate synthase (235 aa).

Residue K13 participates in sn-glycerol 1-phosphate binding. D15 and T42 together coordinate Mg(2+). Residues 162–167 (YVEYSG), G192, and 212–213 (GD) each bind sn-glycerol 1-phosphate.

This sequence belongs to the GGGP/HepGP synthase family. Group I subfamily. Mg(2+) is required as a cofactor.

It is found in the cytoplasm. The catalysed reaction is sn-glycerol 1-phosphate + (2E,6E,10E)-geranylgeranyl diphosphate = sn-3-O-(geranylgeranyl)glycerol 1-phosphate + diphosphate. It functions in the pathway membrane lipid metabolism; glycerophospholipid metabolism. Its function is as follows. Prenyltransferase that catalyzes the transfer of the geranylgeranyl moiety of geranylgeranyl diphosphate (GGPP) to the C3 hydroxyl of sn-glycerol-1-phosphate (G1P). This reaction is the first ether-bond-formation step in the biosynthesis of archaeal membrane lipids. The sequence is that of Geranylgeranylglyceryl phosphate synthase from Natronomonas pharaonis (strain ATCC 35678 / DSM 2160 / CIP 103997 / JCM 8858 / NBRC 14720 / NCIMB 2260 / Gabara) (Halobacterium pharaonis).